Reading from the N-terminus, the 337-residue chain is MHDESRTKQISSIKALLKKWEHEYVHTNNCKPSKEDVKKQPEIALLYKQYYELKRESSITPKKAKTKVDFKFQTPTKQRAETEANESPKAPRNDYLQVTPKTVDKSLLGPTPQLSRRVLNLLEDMSPIADSHVDQISDIKHNTSEISSTMIPTTPSKNPEPVAQHTPTVLETPSSYRLQVYTSPNLLRVNAPCRKSLSEMLRELKDIEDDYGSNEEKILQEFESFSSSSSESLVDRDISQPMKKKIKRQNRLVKLPPSMNLSKSHLEGLPEIDEDAENGIDDNEDTTASKDSSPFLDLQSERQNKKIMRNGLVIGKQVSQNYSSYKLKKRKFRRHRS.

Residues threonine 60 and threonine 74 each carry the phosphothreonine; by cdc2 modification. Residues 71–97 are disordered; the sequence is KFQTPTKQRAETEANESPKAPRNDYLQ. Position 87 is a phosphoserine; by cdc2 (serine 87). 2 positions are modified to phosphothreonine; by cdc2: threonine 99 and threonine 154. The residue at position 183 (serine 183) is a Phosphoserine. A disordered region spans residues 258-302; sequence SMNLSKSHLEGLPEIDEDAENGIDDNEDTTASKDSSPFLDLQSER. The span at 270 to 285 shows a compositional bias: acidic residues; the sequence is PEIDEDAENGIDDNED.

Belongs to the SLD2 family. In terms of assembly, interacts with rad4. Phosphorylated by cdc2 at the onset of S-phase.

Its subcellular location is the cytoplasm. It localises to the nucleus. Has a role in the initiation of DNA replication. Required at S-phase checkpoint. The chain is DNA replication regulator sld2 (drc1) from Schizosaccharomyces pombe (strain 972 / ATCC 24843) (Fission yeast).